The chain runs to 431 residues: Isochorismate synthase MenF (431 aa).

Lys-183 serves as the catalytic Proton acceptor. Glu-233 functions as the Proton donor in the catalytic mechanism. Mg(2+)-binding residues include Glu-277 and Glu-414.

The protein belongs to the isochorismate synthase family. The cofactor is Mg(2+).

It catalyses the reaction chorismate = isochorismate. It participates in quinol/quinone metabolism; 1,4-dihydroxy-2-naphthoate biosynthesis; 1,4-dihydroxy-2-naphthoate from chorismate: step 1/7. The protein operates within quinol/quinone metabolism; menaquinone biosynthesis. In terms of biological role, catalyzes the conversion of chorismate to isochorismate. The polypeptide is Isochorismate synthase MenF (Pasteurella multocida (strain Pm70)).